The chain runs to 587 residues: Monocopper oxidase-like protein SKU5 (587 aa).

The signal sequence occupies residues 1 to 20 (MDLFKILLLVFFVNISFCFA). 2 N-linked (GlcNAc...) asparagine glycosylation sites follow: N14 and N58. Cu cation is bound at residue H80. N-linked (GlcNAc...) asparagine glycosylation is found at N107, N169, N200, N257, N278, N293, N342, N362, N430, and N444. H452 is a Cu cation binding site. N534 carries N-linked (GlcNAc...) asparagine glycosylation. S562 is lipidated: GPI-anchor amidated serine. A propeptide spans 563 to 587 (ASKSIGFTSLSMVVMALVMMMMLQH) (removed in mature form).

This sequence belongs to the multicopper oxidase family. It depends on Cu cation as a cofactor. Expressed in roots, hypocotyls, cotyledons, leaves, stems and flowers.

The protein localises to the secreted. Its subcellular location is the cell wall. It localises to the cell membrane. May be a monocopper oxidase of unknown specificity. Involved in directional growth processes, possibly by participating in cell wall expansion. The polypeptide is Monocopper oxidase-like protein SKU5 (SKU5) (Arabidopsis thaliana (Mouse-ear cress)).